The primary structure comprises 266 residues: MWLSDEFPRDLKTLRDRKPLVHHFMNFVVMNDAANVTLAIGASPIMAHAKEEVEELASKANALYINIGTLDEYWVESMIIAGKAASRNNVPILLDPVGAGATRYRTEVVKRILSETEVSVVKGNGGEMLALAGVTGGVKGVDSIVNATMDTAVKIAEEYGVTAVITGPWDYVSDGVRKVIVKNGTPLLQYVTGSGCMVGSVIASFMAINRDFVKASVEGLVAFEIAAEKAEAKSKAPGTFKQYLIDELFNLTGDDYVKMAKVEVVQ.

Methionine 46 serves as a coordination point for substrate. Residues lysine 122 and threonine 166 each contribute to the ATP site. Glycine 193 provides a ligand contact to substrate.

Belongs to the Thz kinase family. It depends on Mg(2+) as a cofactor.

The catalysed reaction is 5-(2-hydroxyethyl)-4-methylthiazole + ATP = 4-methyl-5-(2-phosphooxyethyl)-thiazole + ADP + H(+). The protein operates within cofactor biosynthesis; thiamine diphosphate biosynthesis; 4-methyl-5-(2-phosphoethyl)-thiazole from 5-(2-hydroxyethyl)-4-methylthiazole: step 1/1. Catalyzes the phosphorylation of the hydroxyl group of 4-methyl-5-beta-hydroxyethylthiazole (THZ). This is Hydroxyethylthiazole kinase from Caldivirga maquilingensis (strain ATCC 700844 / DSM 13496 / JCM 10307 / IC-167).